A 209-amino-acid polypeptide reads, in one-letter code: MANVHVINHPLVQHKLTIIRDKNTGTKAFRELVDEVATLMAYEITRDMELEDIQVETPLQTTTAKTLTGKKLGVVPILRAGLGMQDGILKLIPAAKVGHVGLYRDHDTLEPVEYFVKLPSDVEERLFIVVDPMLATGGSAIMAIDCLKKRGARNMKFMCLVAAPEGVKALQEAHPDVEIYVAGLDEKLDENGYIRPGLGDAGDRLFGTK.

5-phospho-alpha-D-ribose 1-diphosphate is bound by residues R79, R104, and 131 to 139 (DPMLATGGS). Residues I194 and 199 to 201 (GDA) each bind uracil. Position 200 (D200) interacts with 5-phospho-alpha-D-ribose 1-diphosphate.

It belongs to the UPRTase family. Mg(2+) serves as cofactor.

The enzyme catalyses UMP + diphosphate = 5-phospho-alpha-D-ribose 1-diphosphate + uracil. It functions in the pathway pyrimidine metabolism; UMP biosynthesis via salvage pathway; UMP from uracil: step 1/1. Its activity is regulated as follows. Allosterically activated by GTP. Functionally, catalyzes the conversion of uracil and 5-phospho-alpha-D-ribose 1-diphosphate (PRPP) to UMP and diphosphate. This Listeria innocua serovar 6a (strain ATCC BAA-680 / CLIP 11262) protein is Uracil phosphoribosyltransferase.